Consider the following 378-residue polypeptide: Uroporphyrinogen decarboxylase (378 aa).

Residues 40-44, Asp-90, Tyr-167, Ser-222, and His-355 contribute to the substrate site; that span reads RQAGR.

This sequence belongs to the uroporphyrinogen decarboxylase family. Homodimer.

The protein resides in the cytoplasm. It catalyses the reaction uroporphyrinogen III + 4 H(+) = coproporphyrinogen III + 4 CO2. The protein operates within porphyrin-containing compound metabolism; protoporphyrin-IX biosynthesis; coproporphyrinogen-III from 5-aminolevulinate: step 4/4. Catalyzes the decarboxylation of four acetate groups of uroporphyrinogen-III to yield coproporphyrinogen-III. The polypeptide is Uroporphyrinogen decarboxylase (Psychrobacter cryohalolentis (strain ATCC BAA-1226 / DSM 17306 / VKM B-2378 / K5)).